The chain runs to 157 residues: UPF0225 protein PA1039 (157 aa).

It belongs to the UPF0225 family.

This chain is UPF0225 protein PA1039, found in Pseudomonas aeruginosa (strain ATCC 15692 / DSM 22644 / CIP 104116 / JCM 14847 / LMG 12228 / 1C / PRS 101 / PAO1).